The chain runs to 466 residues: Chromosomal replication initiator protein DnaA (466 aa).

Residues 1–77 are domain I, interacts with DnaA modulators; it reads MSQEIWADVL…GAEHPQVEFQ (77 aa). The segment at 77-121 is domain II; the sequence is QVLPAAQDALLLPNDPPPAPEAAAPTPKTKAAPTPPPSTPGDNRK. Positions 87-122 are disordered; the sequence is LLPNDPPPAPEAAAPTPKTKAAPTPPPSTPGDNRKT. The segment covering 97–108 has biased composition (low complexity); the sequence is EAAAPTPKTKAA. The segment at 122–338 is domain III, AAA+ region; that stretch reads TLNPKYTFEN…GALMRVVAFA (217 aa). Positions 166, 168, 169, and 170 each coordinate ATP. Residues 339–466 form a domain IV, binds dsDNA region; the sequence is SLNNVPFSRA…GKEEEEEVGA (128 aa).

The protein belongs to the DnaA family. As to quaternary structure, oligomerizes as a right-handed, spiral filament on DNA at oriC.

It localises to the cytoplasm. In terms of biological role, plays an essential role in the initiation and regulation of chromosomal replication. ATP-DnaA binds to the origin of replication (oriC) to initiate formation of the DNA replication initiation complex once per cell cycle. Binds the DnaA box (a 9 base pair repeat at the origin) and separates the double-stranded (ds)DNA. Forms a right-handed helical filament on oriC DNA; dsDNA binds to the exterior of the filament while single-stranded (ss)DNA is stabiized in the filament's interior. The ATP-DnaA-oriC complex binds and stabilizes one strand of the AT-rich DNA unwinding element (DUE), permitting loading of DNA polymerase. After initiation quickly degrades to an ADP-DnaA complex that is not apt for DNA replication. Binds acidic phospholipids. Strand separation requires the DnaA boxes and adjacent DnaA-trio motifs but works equally well with ADP or ATP. This is Chromosomal replication initiator protein DnaA from Deinococcus radiodurans (strain ATCC 13939 / DSM 20539 / JCM 16871 / CCUG 27074 / LMG 4051 / NBRC 15346 / NCIMB 9279 / VKM B-1422 / R1).